Reading from the N-terminus, the 56-residue chain is Bowman-Birk type proteinase inhibitor I-2B (56 aa).

4 disulfide bridges follow: Cys10–Cys25, Cys15–Cys23, Cys32–Cys39, and Cys36–Cys51.

Belongs to the Bowman-Birk serine protease inhibitor family.

The sequence is that of Bowman-Birk type proteinase inhibitor I-2B from Triticum aestivum (Wheat).